The sequence spans 360 residues: Phospho-N-acetylmuramoyl-pentapeptide-transferase (360 aa).

10 consecutive transmembrane segments (helical) span residues alanine 26–alanine 46, proline 72–tyrosine 92, serine 94–valine 114, tryptophan 132–glycine 152, valine 168–serine 188, glycine 199–threonine 219, alanine 236–phenylalanine 256, valine 263–leucine 283, phenylalanine 288–valine 308, and valine 338–lysine 358.

The protein belongs to the glycosyltransferase 4 family. MraY subfamily. Mg(2+) is required as a cofactor.

It is found in the cell inner membrane. It catalyses the reaction UDP-N-acetyl-alpha-D-muramoyl-L-alanyl-gamma-D-glutamyl-meso-2,6-diaminopimeloyl-D-alanyl-D-alanine + di-trans,octa-cis-undecaprenyl phosphate = di-trans,octa-cis-undecaprenyl diphospho-N-acetyl-alpha-D-muramoyl-L-alanyl-D-glutamyl-meso-2,6-diaminopimeloyl-D-alanyl-D-alanine + UMP. Its pathway is cell wall biogenesis; peptidoglycan biosynthesis. Its function is as follows. Catalyzes the initial step of the lipid cycle reactions in the biosynthesis of the cell wall peptidoglycan: transfers peptidoglycan precursor phospho-MurNAc-pentapeptide from UDP-MurNAc-pentapeptide onto the lipid carrier undecaprenyl phosphate, yielding undecaprenyl-pyrophosphoryl-MurNAc-pentapeptide, known as lipid I. The polypeptide is Phospho-N-acetylmuramoyl-pentapeptide-transferase (Erwinia tasmaniensis (strain DSM 17950 / CFBP 7177 / CIP 109463 / NCPPB 4357 / Et1/99)).